A 217-amino-acid chain; its full sequence is Ribosomal RNA small subunit methyltransferase G (217 aa).

S-adenosyl-L-methionine is bound by residues Gly-78, Phe-83, 129–130 (GE), and Arg-146.

This sequence belongs to the methyltransferase superfamily. RNA methyltransferase RsmG family.

It localises to the cytoplasm. The enzyme catalyses guanosine(527) in 16S rRNA + S-adenosyl-L-methionine = N(7)-methylguanosine(527) in 16S rRNA + S-adenosyl-L-homocysteine. Its function is as follows. Specifically methylates the N7 position of guanine in position 527 of 16S rRNA. This Geobacter sulfurreducens (strain ATCC 51573 / DSM 12127 / PCA) protein is Ribosomal RNA small subunit methyltransferase G.